The sequence spans 253 residues: MGTILDKIVNQKKKEVAALYETYTPVKEKRKTRSLVKALEQFTVIAEVKRASPSKGDINLHVDVRKQVKTYEECGAGAVSVLTDGQFFKGSFYDLQTAREESSIPLLCKDFIIDKIQIDRAYEAGADIILLIVAALTKEKLKELYSYVLEKGLEAIVEVHDEQELEIAIQLNPHVIGINNRNLKTFEVDLSQTEKLGKRLNEEKLLWISESGIHSKEDIIRVKRAGAKGVLVGEALMTSSSIHTFFEDCKVNI.

It belongs to the TrpC family.

It carries out the reaction 1-(2-carboxyphenylamino)-1-deoxy-D-ribulose 5-phosphate + H(+) = (1S,2R)-1-C-(indol-3-yl)glycerol 3-phosphate + CO2 + H2O. It participates in amino-acid biosynthesis; L-tryptophan biosynthesis; L-tryptophan from chorismate: step 4/5. This chain is Indole-3-glycerol phosphate synthase, found in Bacillus anthracis (strain A0248).